A 585-amino-acid chain; its full sequence is Arginine--tRNA ligase (585 aa).

Residues 131-141 carry the 'HIGH' region motif; sequence ANPTGPMHVGH.

This sequence belongs to the class-I aminoacyl-tRNA synthetase family. Monomer.

The protein localises to the cytoplasm. The catalysed reaction is tRNA(Arg) + L-arginine + ATP = L-arginyl-tRNA(Arg) + AMP + diphosphate. The polypeptide is Arginine--tRNA ligase (Brucella canis (strain ATCC 23365 / NCTC 10854 / RM-666)).